The primary structure comprises 261 residues: Ethanolamine ammonia-lyase small subunit (261 aa).

Positions 158, 179, and 208 each coordinate adenosylcob(III)alamin.

This sequence belongs to the EutC family. The basic unit is a heterodimer which dimerizes to form tetramers. The heterotetramers trimerize; 6 large subunits form a core ring with 6 small subunits projecting outwards. Requires adenosylcob(III)alamin as cofactor.

The protein resides in the bacterial microcompartment. The enzyme catalyses ethanolamine = acetaldehyde + NH4(+). It participates in amine and polyamine degradation; ethanolamine degradation. In terms of biological role, catalyzes the deamination of various vicinal amino-alcohols to oxo compounds. Allows this organism to utilize ethanolamine as the sole source of nitrogen and carbon in the presence of external vitamin B12. The protein is Ethanolamine ammonia-lyase small subunit of Bradyrhizobium diazoefficiens (strain JCM 10833 / BCRC 13528 / IAM 13628 / NBRC 14792 / USDA 110).